A 319-amino-acid polypeptide reads, in one-letter code: Aspartate carbamoyltransferase catalytic subunit (319 aa).

Carbamoyl phosphate-binding residues include arginine 65 and threonine 66. Position 93 (lysine 93) interacts with L-aspartate. Positions 115, 143, and 146 each coordinate carbamoyl phosphate. L-aspartate contacts are provided by arginine 176 and arginine 230. Carbamoyl phosphate-binding residues include glycine 271 and proline 272.

This sequence belongs to the aspartate/ornithine carbamoyltransferase superfamily. ATCase family. Heterododecamer (2C3:3R2) of six catalytic PyrB chains organized as two trimers (C3), and six regulatory PyrI chains organized as three dimers (R2).

The catalysed reaction is carbamoyl phosphate + L-aspartate = N-carbamoyl-L-aspartate + phosphate + H(+). It functions in the pathway pyrimidine metabolism; UMP biosynthesis via de novo pathway; (S)-dihydroorotate from bicarbonate: step 2/3. Its function is as follows. Catalyzes the condensation of carbamoyl phosphate and aspartate to form carbamoyl aspartate and inorganic phosphate, the committed step in the de novo pyrimidine nucleotide biosynthesis pathway. This is Aspartate carbamoyltransferase catalytic subunit from Chelativorans sp. (strain BNC1).